Consider the following 142-residue polypeptide: Large ribosomal subunit protein uL11 (142 aa).

It belongs to the universal ribosomal protein uL11 family. In terms of assembly, part of the ribosomal stalk of the 50S ribosomal subunit. Interacts with L10 and the large rRNA to form the base of the stalk. L10 forms an elongated spine to which L12 dimers bind in a sequential fashion forming a multimeric L10(L12)X complex. One or more lysine residues are methylated.

In terms of biological role, forms part of the ribosomal stalk which helps the ribosome interact with GTP-bound translation factors. In Rhodopseudomonas palustris (strain BisB18), this protein is Large ribosomal subunit protein uL11.